We begin with the raw amino-acid sequence, 121 residues long: uncharacterized protein (121 aa).

An HTH gntR-type domain is found at 9 to 77 (KPIYLQIADQ…RGQGTFIAEK (69 aa)). Residues 37–56 (VREMAIQTKVNPNTIQRTYS) constitute a DNA-binding region (H-T-H motif).

This is an uncharacterized protein from Bacillus subtilis (strain 168).